A 241-amino-acid chain; its full sequence is MKLVDYLLEGSVKHFTLIDPDKSVDYLKIVRYALDAGTDGILVGGSLGIRETQMTQVVKDIKSVAHVPVVLFPGSPSQLTEEADGVLFLSVLNSLDPYFIIGAQVQGAVLIAKHFPRLEVISTAYVIVGDGGAAGFVSMSKPIPYARWDLAVAYALAAYYIGFGAVYLEAGSGAPQPVPPEMVRAVRKVFPRVLIVGGGIRSGEAARQLARERPNVIVTGTLAEEQPEKLAEVVRAIKSSL.

Mg(2+) is bound by residues aspartate 19 and serine 46. Residues 167–173 (YLEAGSG), 198–199 (GG), and 220–221 (GT) contribute to the sn-glycerol 1-phosphate site.

Belongs to the GGGP/HepGP synthase family. Group II subfamily. Mg(2+) serves as cofactor.

It is found in the cytoplasm. It carries out the reaction sn-glycerol 1-phosphate + (2E,6E,10E)-geranylgeranyl diphosphate = sn-3-O-(geranylgeranyl)glycerol 1-phosphate + diphosphate. The protein operates within membrane lipid metabolism; glycerophospholipid metabolism. In terms of biological role, prenyltransferase that catalyzes the transfer of the geranylgeranyl moiety of geranylgeranyl diphosphate (GGPP) to the C3 hydroxyl of sn-glycerol-1-phosphate (G1P). This reaction is the first ether-bond-formation step in the biosynthesis of archaeal membrane lipids. This chain is Geranylgeranylglyceryl phosphate synthase, found in Pyrobaculum calidifontis (strain DSM 21063 / JCM 11548 / VA1).